The chain runs to 176 residues: Protein SPMIP1 (176 aa).

The tract at residues 55 to 80 (TLHPKAPLSPPPAPKSAPSKVPSPVP) is disordered. A compositionally biased stretch (pro residues) spans 61-80 (PLSPPPAPKSAPSKVPSPVP).

The chain is Protein SPMIP1 from Homo sapiens (Human).